The primary structure comprises 90 residues: Small ribosomal subunit protein bS20 (90 aa).

The interval 1 to 28 (MPNTSSASKRLRQNEKRRLLNRATRSNM) is disordered.

Belongs to the bacterial ribosomal protein bS20 family.

Its function is as follows. Binds directly to 16S ribosomal RNA. In Rhodopirellula baltica (strain DSM 10527 / NCIMB 13988 / SH1), this protein is Small ribosomal subunit protein bS20.